Consider the following 943-residue polypeptide: Isoleucine--tRNA ligase (943 aa).

The 'HIGH' region motif lies at 59-69 (PYANGRIHLGH). Glu-577 lines the L-isoleucyl-5'-AMP pocket. Positions 618–622 (KMSKS) match the 'KMSKS' region motif. Lys-621 provides a ligand contact to ATP. Zn(2+) contacts are provided by Cys-906, Cys-909, Cys-926, and Cys-929.

It belongs to the class-I aminoacyl-tRNA synthetase family. IleS type 1 subfamily. In terms of assembly, monomer. Zn(2+) is required as a cofactor.

Its subcellular location is the cytoplasm. It catalyses the reaction tRNA(Ile) + L-isoleucine + ATP = L-isoleucyl-tRNA(Ile) + AMP + diphosphate. Its function is as follows. Catalyzes the attachment of isoleucine to tRNA(Ile). As IleRS can inadvertently accommodate and process structurally similar amino acids such as valine, to avoid such errors it has two additional distinct tRNA(Ile)-dependent editing activities. One activity is designated as 'pretransfer' editing and involves the hydrolysis of activated Val-AMP. The other activity is designated 'posttransfer' editing and involves deacylation of mischarged Val-tRNA(Ile). The polypeptide is Isoleucine--tRNA ligase (Stenotrophomonas maltophilia (strain K279a)).